Here is a 67-residue protein sequence, read N- to C-terminus: Conotoxin mr3d (67 aa).

Residues 1-19 (MSKLGILLTICLLLFPLTA) form the signal peptide. Residues 20–52 (VPLDGDQPADRPAERMQDDISSEHHPFFDPVKR) constitute a propeptide that is removed on maturation. Cystine bridges form between C53/C65, C54/C62, and C58/C66. 4-hydroxyproline; partial is present on P64. C66 bears the Cysteine amide; partial mark.

This sequence belongs to the conotoxin M superfamily. In terms of processing, has been found to be hydroxylated and amidated by Han et al. (2006), and to be unmodified by Ju et al. (2022). In terms of tissue distribution, expressed by the venom duct.

It localises to the secreted. The polypeptide is Conotoxin mr3d (Conus marmoreus (Marble cone)).